A 483-amino-acid chain; its full sequence is Glutamate--tRNA ligase (483 aa).

The 'HIGH' region signature appears at 9–19 (PSPTGYLHIGN). The 'KMSKS' region signature appears at 250 to 254 (KLSKR). Lys253 contributes to the ATP binding site.

This sequence belongs to the class-I aminoacyl-tRNA synthetase family. Glutamate--tRNA ligase type 1 subfamily. Monomer.

Its subcellular location is the cytoplasm. It catalyses the reaction tRNA(Glu) + L-glutamate + ATP = L-glutamyl-tRNA(Glu) + AMP + diphosphate. In terms of biological role, catalyzes the attachment of glutamate to tRNA(Glu) in a two-step reaction: glutamate is first activated by ATP to form Glu-AMP and then transferred to the acceptor end of tRNA(Glu). The sequence is that of Glutamate--tRNA ligase from Blochmanniella floridana.